Consider the following 264-residue polypeptide: MVTLMAIAIAIASGKGGTGKTTISANLAVALAKFGKKVAVLDADIAMANLELIMGLEGKPVTLNDVLAGKADIKDAIYEGPEGVLVIPAGVSLEKFRRAKPEKLEEVLKAIHDLVEILIIDCPAGIGKETLIAISSADGLIVVVNPEISSISDALKIIAITKRLGTDIIGAIVNRVSNESTELGVKAIETILEVPVIGVVPEDPHVRKAAAFGTPLVIMYPDSPAAQAIMEIAAKLIGAKYEAQLKKKKESFISKFIKGLFGRR.

Lys15 to Thr22 serves as a coordination point for ATP.

This sequence belongs to the ParA family. MinD subfamily.

This is an uncharacterized protein from Methanocaldococcus jannaschii (strain ATCC 43067 / DSM 2661 / JAL-1 / JCM 10045 / NBRC 100440) (Methanococcus jannaschii).